The primary structure comprises 1603 residues: Protein TIC 214 (1603 aa).

Transmembrane regions (helical) follow at residues 11–31 (VLWA…LFGL), 58–78 (LSGT…FLSI), 86–106 (LLLK…FYWY), 131–151 (IFFD…SPIL), 167–187 (LFVL…FNCI), and 213–233 (FSIF…VPFF).

Belongs to the TIC214 family. Part of the Tic complex.

Its subcellular location is the plastid. It is found in the chloroplast inner membrane. Its function is as follows. Involved in protein precursor import into chloroplasts. May be part of an intermediate translocation complex acting as a protein-conducting channel at the inner envelope. The protein is Protein TIC 214 of Physcomitrium patens (Spreading-leaved earth moss).